We begin with the raw amino-acid sequence, 376 residues long: 3-dehydroquinate synthase (376 aa).

Residues 115–119 (GVIGD), 139–140 (TS), K152, and K161 contribute to the NAD(+) site. Zn(2+) is bound by residues E194, H256, and H275.

It belongs to the sugar phosphate cyclases superfamily. Dehydroquinate synthase family. The cofactor is Co(2+). Requires Zn(2+) as cofactor. It depends on NAD(+) as a cofactor.

The protein localises to the cytoplasm. It carries out the reaction 7-phospho-2-dehydro-3-deoxy-D-arabino-heptonate = 3-dehydroquinate + phosphate. Its pathway is metabolic intermediate biosynthesis; chorismate biosynthesis; chorismate from D-erythrose 4-phosphate and phosphoenolpyruvate: step 2/7. In terms of biological role, catalyzes the conversion of 3-deoxy-D-arabino-heptulosonate 7-phosphate (DAHP) to dehydroquinate (DHQ). This Rhizobium etli (strain CIAT 652) protein is 3-dehydroquinate synthase.